Here is a 79-residue protein sequence, read N- to C-terminus: Probable [Fe-S]-dependent transcriptional repressor (79 aa).

Iron-sulfur cluster-binding residues include cysteine 54, cysteine 59, cysteine 62, and cysteine 68.

Belongs to the FeoC family.

Its function is as follows. May function as a transcriptional regulator that controls feoABC expression. This chain is Probable [Fe-S]-dependent transcriptional repressor, found in Photorhabdus laumondii subsp. laumondii (strain DSM 15139 / CIP 105565 / TT01) (Photorhabdus luminescens subsp. laumondii).